Reading from the N-terminus, the 937-residue chain is Isoleucine--tRNA ligase (937 aa).

A 'HIGH' region motif is present at residues 58 to 68; the sequence is PYANGSIHIGH. Residue glutamate 561 coordinates L-isoleucyl-5'-AMP. The short motif at 602 to 606 is the 'KMSKS' region element; sequence KMSKS. Lysine 605 contacts ATP. The Zn(2+) site is built by cysteine 900, cysteine 903, cysteine 920, and cysteine 923.

The protein belongs to the class-I aminoacyl-tRNA synthetase family. IleS type 1 subfamily. Monomer. It depends on Zn(2+) as a cofactor.

Its subcellular location is the cytoplasm. It carries out the reaction tRNA(Ile) + L-isoleucine + ATP = L-isoleucyl-tRNA(Ile) + AMP + diphosphate. Its function is as follows. Catalyzes the attachment of isoleucine to tRNA(Ile). As IleRS can inadvertently accommodate and process structurally similar amino acids such as valine, to avoid such errors it has two additional distinct tRNA(Ile)-dependent editing activities. One activity is designated as 'pretransfer' editing and involves the hydrolysis of activated Val-AMP. The other activity is designated 'posttransfer' editing and involves deacylation of mischarged Val-tRNA(Ile). The protein is Isoleucine--tRNA ligase of Pectobacterium carotovorum subsp. carotovorum (strain PC1).